The primary structure comprises 474 residues: Probable cytosol aminopeptidase (474 aa).

Mn(2+) is bound by residues K237 and D242. K249 is a catalytic residue. Residues D260, D319, and E321 each contribute to the Mn(2+) site. Residue R323 is part of the active site.

The protein belongs to the peptidase M17 family. The cofactor is Mn(2+).

It localises to the cytoplasm. The enzyme catalyses Release of an N-terminal amino acid, Xaa-|-Yaa-, in which Xaa is preferably Leu, but may be other amino acids including Pro although not Arg or Lys, and Yaa may be Pro. Amino acid amides and methyl esters are also readily hydrolyzed, but rates on arylamides are exceedingly low.. It carries out the reaction Release of an N-terminal amino acid, preferentially leucine, but not glutamic or aspartic acids.. Functionally, presumably involved in the processing and regular turnover of intracellular proteins. Catalyzes the removal of unsubstituted N-terminal amino acids from various peptides. This is Probable cytosol aminopeptidase from Helicobacter hepaticus (strain ATCC 51449 / 3B1).